A 129-amino-acid chain; its full sequence is Small ribosomal subunit protein eS6 (129 aa).

The protein belongs to the eukaryotic ribosomal protein eS6 family.

The chain is Small ribosomal subunit protein eS6 from Archaeoglobus fulgidus (strain ATCC 49558 / DSM 4304 / JCM 9628 / NBRC 100126 / VC-16).